A 493-amino-acid chain; its full sequence is Transcript termination protein A18 (493 aa).

In terms of domain architecture, Helicase ATP-binding spans 100–256; that stretch reads MIELKRPLYI…NSIINIAKLS (157 aa). 113-120 provides a ligand contact to ATP; that stretch reads LACGFGKT. Positions 206–209 match the DESH box motif; that stretch reads DESH.

Belongs to the helicase family. Poxviruses subfamily. Interacts with G2. Might be part of a transcription complex composed at least of G2, A18, and H5.

Its subcellular location is the virion. DNA helicase which seems to act as a postreplicative transcription termination factor. Involved in ATP-dependent release of nascent RNA. Forms a stable complex with single-stranded DNA, and to a lesser extent RNA. The polypeptide is Transcript termination protein A18 (Camelus).